We begin with the raw amino-acid sequence, 1358 residues long: DNA-directed RNA polymerase subunit beta (1358 aa).

Belongs to the RNA polymerase beta chain family. As to quaternary structure, the RNAP catalytic core consists of 2 alpha, 1 beta, 1 beta' and 1 omega subunit. When a sigma factor is associated with the core the holoenzyme is formed, which can initiate transcription.

The catalysed reaction is RNA(n) + a ribonucleoside 5'-triphosphate = RNA(n+1) + diphosphate. In terms of biological role, DNA-dependent RNA polymerase catalyzes the transcription of DNA into RNA using the four ribonucleoside triphosphates as substrates. In Francisella tularensis subsp. holarctica (strain OSU18), this protein is DNA-directed RNA polymerase subunit beta.